Reading from the N-terminus, the 82-residue chain is Small ribosomal subunit protein uS17 (82 aa).

This sequence belongs to the universal ribosomal protein uS17 family. Part of the 30S ribosomal subunit.

Functionally, one of the primary rRNA binding proteins, it binds specifically to the 5'-end of 16S ribosomal RNA. The sequence is that of Small ribosomal subunit protein uS17 from Azorhizobium caulinodans (strain ATCC 43989 / DSM 5975 / JCM 20966 / LMG 6465 / NBRC 14845 / NCIMB 13405 / ORS 571).